We begin with the raw amino-acid sequence, 911 residues long: Zinc finger protein 721 (911 aa).

Residues 69-91 (FQCNARVKVFSKFANSNKDKTRH) form a C2H2-type 1; degenerate zinc finger. Residues 97 to 119 (FKCNECGKSFQKFSDLTQHKGIH) form a C2H2-type 2 zinc finger. Residues 125 to 147 (YTCEERGKDFGWYTDLNQHKKIH) form a C2H2-type 3; degenerate zinc finger. Residues 153–175 (YKCEECGKAFNRSTNLTAHKRIH) form a C2H2-type 4 zinc finger. The C2H2-type 5; degenerate zinc finger occupies 181-203 (YTGEDRDRAFGWSTNLNEYKKIH). C2H2-type zinc fingers lie at residues 209–231 (YKCKECGKAFMHSSHLNKHEKIH), 237–259 (YKCKECGKVISSSSSFAKHKRIH), 265–287 (FKCLECGKAFNISTTLTKHRRIH), 293–315 (YTCEVCGKAFRQSANLYVHRRIH), 321–343 (YTCGECGKTFRQSANLYVHRRIH), 349–371 (YKCEDCGKAFGRYTALNQHKKIH), and 377–399 (YKCEECGKAFNSSTNLTAHKRIH). A C2H2-type 13; degenerate zinc finger spans residues 405–427 (YTCEDRGRAFGLSTNLNEYKKIH). 6 C2H2-type zinc fingers span residues 433 to 455 (YKCKECGKAFIHSLHLNKHEKIH), 461 to 483 (YKCKQCGKVITSSSSFAKHKRIH), 489 to 511 (FECLECGKAFTSSTTLTKHRRIH), 517 to 539 (YTCEVCGKAFRQSAILYVHRRIH), 545 to 567 (YTCEECGKTFRQSANLYVHRRIH), and 573 to 595 (YKCEECGKAFGRYTDLNQHKKIH). A Glycyl lysine isopeptide (Lys-Gly) (interchain with G-Cter in SUMO2) cross-link involves residue K478. Residues 601–623 (YKCEECGKDFVWYTDLNQQKKIY) form a C2H2-type 20; degenerate zinc finger. Residues 629-651 (YKCEECGKAFAPSTDLNQHTKIL) form a C2H2-type 21; degenerate zinc finger. Residue K649 forms a Glycyl lysine isopeptide (Lys-Gly) (interchain with G-Cter in SUMO2) linkage. 2 C2H2-type zinc fingers span residues 657 to 679 (YKCEECGKAFGWSIALNQHKKIH) and 685 to 707 (YKCEECGKAFSRSRNLTTHRRVH). The segment at 713–735 (YKCEDRGRSFGWSTNLNEYKKIH) adopts a C2H2-type 24; degenerate zinc-finger fold. 6 C2H2-type zinc fingers span residues 741 to 763 (YKCKECGKVFKQSSHLNRHEKIH), 769 to 791 (YKCKECGKVITSSSSFAKHKRIH), 797 to 819 (FKCLECGKAFTSSTTLTKHRRIH), 825 to 847 (YTCEECGKAFRQSAILYVHRRIH), 853 to 875 (YTCGECGKTFRQSANLYAHKKIH), and 881 to 903 (YTCGDCGKTFRQSANLYAHKKIH). K786 is covalently cross-linked (Glycyl lysine isopeptide (Lys-Gly) (interchain with G-Cter in SUMO2)).

The protein belongs to the krueppel C2H2-type zinc-finger protein family.

It is found in the nucleus. Functionally, may be involved in transcriptional regulation. The sequence is that of Zinc finger protein 721 (ZNF721) from Homo sapiens (Human).